Consider the following 270-residue polypeptide: DNA repair protein RecO (270 aa).

The segment at 202–221 is disordered; it reads PELPPSTIDADTDNPSQPPS.

Belongs to the RecO family.

Functionally, involved in DNA repair and RecF pathway recombination. In Rhodopirellula baltica (strain DSM 10527 / NCIMB 13988 / SH1), this protein is DNA repair protein RecO.